The sequence spans 360 residues: Phospho-N-acetylmuramoyl-pentapeptide-transferase (360 aa).

A run of 10 helical transmembrane segments spans residues 27-47 (GAVMTAMLVAFVFGPGIIEWL), 73-93 (TMGGIMILLGVGVATLLWADL), 98-118 (VWAVLLLTLGYGAIGFADDYL), 134-154 (LVAQVGMAVIAGLWIMLLGQG), 168-188 (LTFNLGWFYLPFAAFVMVGAS), 199-219 (GLAIVPVMIAAGVFMLIAYLV), 239-259 (LAVFCGAIVGAAVGFLWFNAP), 263-283 (VFMGDTGSLALGGALGAVSVV), 288-308 (IVLAIVGGLFVLETVSVIVQV), and 337-357 (TVVIRFWIIAMILAIVGLSTL).

This sequence belongs to the glycosyltransferase 4 family. MraY subfamily. It depends on Mg(2+) as a cofactor.

It is found in the cell inner membrane. The catalysed reaction is UDP-N-acetyl-alpha-D-muramoyl-L-alanyl-gamma-D-glutamyl-meso-2,6-diaminopimeloyl-D-alanyl-D-alanine + di-trans,octa-cis-undecaprenyl phosphate = di-trans,octa-cis-undecaprenyl diphospho-N-acetyl-alpha-D-muramoyl-L-alanyl-D-glutamyl-meso-2,6-diaminopimeloyl-D-alanyl-D-alanine + UMP. It functions in the pathway cell wall biogenesis; peptidoglycan biosynthesis. Functionally, catalyzes the initial step of the lipid cycle reactions in the biosynthesis of the cell wall peptidoglycan: transfers peptidoglycan precursor phospho-MurNAc-pentapeptide from UDP-MurNAc-pentapeptide onto the lipid carrier undecaprenyl phosphate, yielding undecaprenyl-pyrophosphoryl-MurNAc-pentapeptide, known as lipid I. The protein is Phospho-N-acetylmuramoyl-pentapeptide-transferase of Rhodospirillum rubrum (strain ATCC 11170 / ATH 1.1.1 / DSM 467 / LMG 4362 / NCIMB 8255 / S1).